Consider the following 898-residue polypeptide: Transportin-1 (898 aa).

HEAT repeat units follow at residues 19 to 46 (GLQQ…QKLE), 51 to 89 (YPDF…AHFQ), 98 to 131 (FIKS…KGEL), 137 to 174 (LLPK…LDSD), 181 to 211 (NIMI…QFII), 224 to 251 (FIEN…VMLL), 263 to 290 (HNIV…FWLT), 306 to 397 (PKLI…LANV), 405 to 433 (HILP…GAIA), 445 to 472 (PELI…TLSR), 486 to 519 (LKPL…EEEA), 527 to 560 (LAYI…ADSV), 568 to 606 (EYIQ…TALQ), 614 to 665 (EPVY…GLGG), 676 to 707 (ILTL…KACF), 715 to 748 (ADFM…IQMG), 756 to 791 (PMVL…YVCP), 799 to 832 (QQFI…ISVN), 841 to 872 (IFFC…KNQV), and 875 to 895 (ENWR…LAAF). The 69-residue stretch at 41–109 (VQQKLEQLNQ…KSECLNNIGD (69 aa)) folds into the Importin N-terminal domain. Residues 347–374 (FHRSRTVAQQHEEDGIEEEDDDDDEIDD) are disordered. Residues 360–374 (DGIEEEDDDDDEIDD) show a composition bias toward acidic residues.

This sequence belongs to the importin beta family. Importin beta-2 subfamily. Identified in a complex that contains TNPO1, RAN and RANBP1. Binds HNRPA1, HNRPA2, HNRNPDL, RPS7, RPL5 and RAN. Interacts with H2A, H2B, H3 and H4 histones. Interacts with isoform 1 and isoform 5 of ADAR/ADAR1 (via DRBM 3 domain). Interacts with SNAI1 (via zinc fingers); the interaction mediates SNAI1 nuclear import. Interacts with SNAI2 (via zinc fingers). Interacts with RPL23A (via BIB domain) and SRP19; this interaction is involved in RPL23A and SRP19 import into the nucleus. Interacts (via HEAT repeats 8-12) with BAP1 (via non-classical PY-NLS); this interaction is direct, is involved in BAP1 nuclear import and disrupts BAP1 homodimerization.

The protein resides in the cytoplasm. Its subcellular location is the nucleus. Functionally, functions in nuclear protein import as nuclear transport receptor. Serves as receptor for nuclear localization signals (NLS) in cargo substrates. May mediate docking of the importin/substrate complex to the nuclear pore complex (NPC) through binding to nucleoporin and the complex is subsequently translocated through the pore by an energy requiring, Ran-dependent mechanism. At the nucleoplasmic side of the NPC, Ran binds to the importin, the importin/substrate complex dissociates and importin is re-exported from the nucleus to the cytoplasm where GTP hydrolysis releases Ran. The directionality of nuclear import is thought to be conferred by an asymmetric distribution of the GTP- and GDP-bound forms of Ran between the cytoplasm and nucleus. Involved in nuclear import of M9-containing proteins. In vitro, binds directly to the M9 region of the heterogeneous nuclear ribonucleoproteins (hnRNP), A1 and A2 and mediates their nuclear import. Involved in hnRNP A1/A2 nuclear export. Mediates the nuclear import of ribosomal proteins RPL23A, RPS7 and RPL5. In vitro, mediates nuclear import of SRP19. Mediates the import of histones H2A, H2B, H3 and H4. Mediates nuclear import of ADAR/ADAR1 in a RanGTP-dependent manner. Main mediator of PR-DUB complex component BAP1 nuclear import; acts redundantly with the karyopherins KPNA1 and KPNA2. This Mus musculus (Mouse) protein is Transportin-1 (Tnpo1).